A 327-amino-acid chain; its full sequence is Lipoyl synthase (327 aa).

[4Fe-4S] cluster-binding residues include cysteine 72, cysteine 77, cysteine 83, cysteine 98, cysteine 102, cysteine 105, and serine 313. Residues 83 to 302 form the Radical SAM core domain; it reads CWSHGTATIM…RKVGLEKGFL (220 aa).

Belongs to the radical SAM superfamily. Lipoyl synthase family. The cofactor is [4Fe-4S] cluster.

It is found in the cytoplasm. It catalyses the reaction [[Fe-S] cluster scaffold protein carrying a second [4Fe-4S](2+) cluster] + N(6)-octanoyl-L-lysyl-[protein] + 2 oxidized [2Fe-2S]-[ferredoxin] + 2 S-adenosyl-L-methionine + 4 H(+) = [[Fe-S] cluster scaffold protein] + N(6)-[(R)-dihydrolipoyl]-L-lysyl-[protein] + 4 Fe(3+) + 2 hydrogen sulfide + 2 5'-deoxyadenosine + 2 L-methionine + 2 reduced [2Fe-2S]-[ferredoxin]. The protein operates within protein modification; protein lipoylation via endogenous pathway; protein N(6)-(lipoyl)lysine from octanoyl-[acyl-carrier-protein]: step 2/2. Functionally, catalyzes the radical-mediated insertion of two sulfur atoms into the C-6 and C-8 positions of the octanoyl moiety bound to the lipoyl domains of lipoate-dependent enzymes, thereby converting the octanoylated domains into lipoylated derivatives. The sequence is that of Lipoyl synthase from Francisella tularensis subsp. holarctica (strain FTNF002-00 / FTA).